Here is an 81-residue protein sequence, read N- to C-terminus: ATP synthase subunit c, chloroplastic (81 aa).

A run of 2 helical transmembrane segments spans residues 7–27 (AASVIAAGLAVGLASIGPGIG) and 57–77 (LAFMEALTIYGLVVALALLFA).

The protein belongs to the ATPase C chain family. As to quaternary structure, F-type ATPases have 2 components, F(1) - the catalytic core - and F(0) - the membrane proton channel. F(1) has five subunits: alpha(3), beta(3), gamma(1), delta(1), epsilon(1). F(0) has four main subunits: a(1), b(1), b'(1) and c(10-14). The alpha and beta chains form an alternating ring which encloses part of the gamma chain. F(1) is attached to F(0) by a central stalk formed by the gamma and epsilon chains, while a peripheral stalk is formed by the delta, b and b' chains.

It is found in the plastid. The protein localises to the chloroplast thylakoid membrane. Functionally, f(1)F(0) ATP synthase produces ATP from ADP in the presence of a proton or sodium gradient. F-type ATPases consist of two structural domains, F(1) containing the extramembraneous catalytic core and F(0) containing the membrane proton channel, linked together by a central stalk and a peripheral stalk. During catalysis, ATP synthesis in the catalytic domain of F(1) is coupled via a rotary mechanism of the central stalk subunits to proton translocation. Its function is as follows. Key component of the F(0) channel; it plays a direct role in translocation across the membrane. A homomeric c-ring of between 10-14 subunits forms the central stalk rotor element with the F(1) delta and epsilon subunits. This is ATP synthase subunit c, chloroplastic from Staurastrum punctulatum (Green alga).